A 699-amino-acid polypeptide reads, in one-letter code: tRNA 5-methylaminomethyl-2-thiouridine biosynthesis bifunctional protein MnmC (699 aa).

The segment at 1–260 (MTAKPQKSCQ…ERKLLRQQAD (260 aa)) is tRNA (mnm(5)s(2)U34)-methyltransferase. Residues 282–699 (VGGGLASANL…LRKLLKGKAL (418 aa)) are FAD-dependent cmnm(5)s(2)U34 oxidoreductase.

It in the N-terminal section; belongs to the methyltransferase superfamily. tRNA (mnm(5)s(2)U34)-methyltransferase family. In the C-terminal section; belongs to the DAO family. FAD serves as cofactor.

It is found in the cytoplasm. The enzyme catalyses 5-aminomethyl-2-thiouridine(34) in tRNA + S-adenosyl-L-methionine = 5-methylaminomethyl-2-thiouridine(34) in tRNA + S-adenosyl-L-homocysteine + H(+). Functionally, catalyzes the last two steps in the biosynthesis of 5-methylaminomethyl-2-thiouridine (mnm(5)s(2)U) at the wobble position (U34) in tRNA. Catalyzes the FAD-dependent demodification of cmnm(5)s(2)U34 to nm(5)s(2)U34, followed by the transfer of a methyl group from S-adenosyl-L-methionine to nm(5)s(2)U34, to form mnm(5)s(2)U34. This Shewanella sp. (strain MR-4) protein is tRNA 5-methylaminomethyl-2-thiouridine biosynthesis bifunctional protein MnmC.